Consider the following 185-residue polypeptide: Elongation factor P (185 aa).

This sequence belongs to the elongation factor P family.

The protein localises to the cytoplasm. It functions in the pathway protein biosynthesis; polypeptide chain elongation. Functionally, involved in peptide bond synthesis. Stimulates efficient translation and peptide-bond synthesis on native or reconstituted 70S ribosomes in vitro. Probably functions indirectly by altering the affinity of the ribosome for aminoacyl-tRNA, thus increasing their reactivity as acceptors for peptidyl transferase. This chain is Elongation factor P, found in Nitrosomonas eutropha (strain DSM 101675 / C91 / Nm57).